Consider the following 170-residue polypeptide: MRLVVGRIGRPHGVKGEVTVEVRTDSPEERFVVGKALETDPADVGPLTITAQRWHKDRLLVRFEEVPDRTAAEQLRGVFLVVDSAELPPLDDPDEFHDHELIGLRVETVDGEAVGEVVDVLHHAQDMLVVSGEKGSEVLVPFVRELVPDVDTAAGRVVIDPPPGLLELGR.

Residues 93–165 (PDEFHDHELI…RVVIDPPPGL (73 aa)) enclose the PRC barrel domain.

Belongs to the RimM family. As to quaternary structure, binds ribosomal protein uS19.

It is found in the cytoplasm. Functionally, an accessory protein needed during the final step in the assembly of 30S ribosomal subunit, possibly for assembly of the head region. Essential for efficient processing of 16S rRNA. May be needed both before and after RbfA during the maturation of 16S rRNA. It has affinity for free ribosomal 30S subunits but not for 70S ribosomes. The protein is Ribosome maturation factor RimM of Thermobifida fusca (strain YX).